We begin with the raw amino-acid sequence, 305 residues long: Large ribosomal subunit protein uL2m (305 aa).

The transit peptide at 1–60 (MALCALTRALRSLNLAPPTVAAPAPSLFPAAQMMNNGLLQQPSALMLLPCRPVLTSVALN) directs the protein to the mitochondrion. The tract at residues 264-283 (RWLGKRPNSGRWHRKGGWAG) is disordered. A compositionally biased stretch (basic residues) spans 274-283 (RWHRKGGWAG).

This sequence belongs to the universal ribosomal protein uL2 family. In terms of assembly, component of the mitochondrial large ribosomal subunit (mt-LSU). Mature mammalian 55S mitochondrial ribosomes consist of a small (28S) and a large (39S) subunit. The 28S small subunit contains a 12S ribosomal RNA (12S mt-rRNA) and 30 different proteins. The 39S large subunit contains a 16S rRNA (16S mt-rRNA), a copy of mitochondrial valine transfer RNA (mt-tRNA(Val)), which plays an integral structural role, and 52 different proteins.

Its subcellular location is the mitochondrion. The chain is Large ribosomal subunit protein uL2m (MRPL2) from Homo sapiens (Human).